Consider the following 190-residue polypeptide: Imidazoleglycerol-phosphate dehydratase (190 aa).

The protein belongs to the imidazoleglycerol-phosphate dehydratase family.

It is found in the cytoplasm. It catalyses the reaction D-erythro-1-(imidazol-4-yl)glycerol 3-phosphate = 3-(imidazol-4-yl)-2-oxopropyl phosphate + H2O. It functions in the pathway amino-acid biosynthesis; L-histidine biosynthesis; L-histidine from 5-phospho-alpha-D-ribose 1-diphosphate: step 6/9. This is Imidazoleglycerol-phosphate dehydratase from Methanococcus maripaludis (strain C7 / ATCC BAA-1331).